Here is an 84-residue protein sequence, read N- to C-terminus: Large ribosomal subunit protein bL31B (84 aa).

It belongs to the bacterial ribosomal protein bL31 family. Type B subfamily. In terms of assembly, part of the 50S ribosomal subunit.

Binds the 23S rRNA. The polypeptide is Large ribosomal subunit protein bL31B (Rhodococcus jostii (strain RHA1)).